Reading from the N-terminus, the 239-residue chain is Small ribosomal subunit protein uS2 (239 aa).

Belongs to the universal ribosomal protein uS2 family.

In Synechococcus sp. (strain WH7803), this protein is Small ribosomal subunit protein uS2.